Reading from the N-terminus, the 204-residue chain is Phosphoribosyl-dephospho-CoA transferase (204 aa).

Catalysis depends on residues Asp129 and Asp131.

This sequence belongs to the MdcG family.

The catalysed reaction is apo-[malonate decarboxylase ACP] + 2'-(5''-triphospho-alpha-D-ribosyl)-3'-dephospho-CoA = holo-[malonate decarboxylase ACP] + diphosphate. Transfers 2'-(5-triphosphoribosyl)-3'-dephosphocoenzyme-A to the apo-[acyl-carrier-protein] of the malonate decarboxylase to yield holo-[acyl-carrier-protein]. This Pseudomonas putida (strain GB-1) protein is Phosphoribosyl-dephospho-CoA transferase.